The sequence spans 152 residues: Lipoprotein signal peptidase (152 aa).

A run of 2 helical transmembrane segments spans residues Asn55–Met75 and Leu85–Phe105. Catalysis depends on residues Asp111 and Asp129. Residues Val124 to Leu144 form a helical membrane-spanning segment.

The protein belongs to the peptidase A8 family.

The protein localises to the cell membrane. The catalysed reaction is Release of signal peptides from bacterial membrane prolipoproteins. Hydrolyzes -Xaa-Yaa-Zaa-|-(S,diacylglyceryl)Cys-, in which Xaa is hydrophobic (preferably Leu), and Yaa (Ala or Ser) and Zaa (Gly or Ala) have small, neutral side chains.. Its pathway is protein modification; lipoprotein biosynthesis (signal peptide cleavage). Functionally, this protein specifically catalyzes the removal of signal peptides from prolipoproteins. The sequence is that of Lipoprotein signal peptidase from Bacillus cereus (strain ZK / E33L).